A 255-amino-acid chain; its full sequence is MSLDLSTSLSPARPLESADAMEERLREIGAARYHDRHPFHHMLHGGELTKGQVQAWALNRYYYQCTIPVKDAVVISRFRDRATRIEWRHRLEDHDGAEGAEGGIDRWLILTDGLGLDRAYVESTEGILPATRFAVEAYVHFVRDRSPLEAIASCLTELFAPNIHATRISGMLSHYDFINPTVMAYFQRRLTQAPRDADYALRYVRDHARTPEERAAVCNALIFKTQVLWTQLDALHHAYVLGHVPPGAFVPEEMR.

The protein belongs to the PqqC family.

The catalysed reaction is 6-(2-amino-2-carboxyethyl)-7,8-dioxo-1,2,3,4,7,8-hexahydroquinoline-2,4-dicarboxylate + 3 O2 = pyrroloquinoline quinone + 2 H2O2 + 2 H2O + H(+). It functions in the pathway cofactor biosynthesis; pyrroloquinoline quinone biosynthesis. Ring cyclization and eight-electron oxidation of 3a-(2-amino-2-carboxyethyl)-4,5-dioxo-4,5,6,7,8,9-hexahydroquinoline-7,9-dicarboxylic-acid to PQQ. This chain is Pyrroloquinoline-quinone synthase, found in Cereibacter sphaeroides (strain ATCC 17023 / DSM 158 / JCM 6121 / CCUG 31486 / LMG 2827 / NBRC 12203 / NCIMB 8253 / ATH 2.4.1.) (Rhodobacter sphaeroides).